The sequence spans 181 residues: ADP-ribosylation factor 2 (181 aa).

A lipid anchor (N-myristoyl glycine) is attached at G2. GTP-binding positions include 24-31, 67-71, and 126-129; these read GLDAAGKT, DVGGQ, and NKQD.

The protein belongs to the small GTPase superfamily. Arf family.

It is found in the golgi apparatus. GTP-binding protein that functions as an allosteric activator of the cholera toxin catalytic subunit, an ADP-ribosyltransferase. Involved in protein trafficking; may modulate vesicle budding and uncoating within the Golgi apparatus. This is ADP-ribosylation factor 2 (ARF2) from Bos taurus (Bovine).